The primary structure comprises 300 residues: Bifunctional protein FolD 2 (300 aa).

Residues 165–167 (GRS), Ser190, and Ile231 each bind NADP(+).

It belongs to the tetrahydrofolate dehydrogenase/cyclohydrolase family. As to quaternary structure, homodimer.

It carries out the reaction (6R)-5,10-methylene-5,6,7,8-tetrahydrofolate + NADP(+) = (6R)-5,10-methenyltetrahydrofolate + NADPH. It catalyses the reaction (6R)-5,10-methenyltetrahydrofolate + H2O = (6R)-10-formyltetrahydrofolate + H(+). Its pathway is one-carbon metabolism; tetrahydrofolate interconversion. Functionally, catalyzes the oxidation of 5,10-methylenetetrahydrofolate to 5,10-methenyltetrahydrofolate and then the hydrolysis of 5,10-methenyltetrahydrofolate to 10-formyltetrahydrofolate. This chain is Bifunctional protein FolD 2, found in Pseudomonas syringae pv. tomato (strain ATCC BAA-871 / DC3000).